Reading from the N-terminus, the 226-residue chain is dITP/XTP pyrophosphatase (226 aa).

Residue 14–19 (TGNKDK) participates in substrate binding. Glu-49 and Asp-83 together coordinate Mg(2+). Residue Asp-83 is the Proton acceptor of the active site. Substrate contacts are provided by residues Thr-84, 176 to 179 (FGYD), Lys-199, and 204 to 205 (HR).

The protein belongs to the HAM1 NTPase family. As to quaternary structure, homodimer. The cofactor is Mg(2+).

It carries out the reaction XTP + H2O = XMP + diphosphate + H(+). It catalyses the reaction dITP + H2O = dIMP + diphosphate + H(+). The catalysed reaction is ITP + H2O = IMP + diphosphate + H(+). Functionally, pyrophosphatase that catalyzes the hydrolysis of nucleoside triphosphates to their monophosphate derivatives, with a high preference for the non-canonical purine nucleotides XTP (xanthosine triphosphate), dITP (deoxyinosine triphosphate) and ITP. Seems to function as a house-cleaning enzyme that removes non-canonical purine nucleotides from the nucleotide pool, thus preventing their incorporation into DNA/RNA and avoiding chromosomal lesions. The protein is dITP/XTP pyrophosphatase of Chlorobaculum tepidum (strain ATCC 49652 / DSM 12025 / NBRC 103806 / TLS) (Chlorobium tepidum).